The sequence spans 865 residues: Chitin synthase 3 (865 aa).

Residues 1–59 form a disordered region; that stretch reads MASQYPGHQLDDIPSTNVYRPPPRHEDDEAEHALLHQNSAYQSQYDDPHSRPLTPGQES. Residues 23–34 are compositionally biased toward basic and acidic residues; that stretch reads PRHEDDEAEHAL. Positions 36 to 45 are enriched in polar residues; it reads HQNSAYQSQY. N-linked (GlcNAc...) asparagine glycosylation is found at Asn64, Asn95, and Asn538. The next 3 membrane-spanning stretches (helical) occupy residues 565 to 585, 620 to 640, and 650 to 670; these read FFLH…WFSL, IINT…FILA, and VAYI…IVLS. Asn682 carries an N-linked (GlcNAc...) asparagine glycan. A run of 3 helical transmembrane segments spans residues 707–727, 735–755, and 837–857; these read IVII…FLYM, SFAQ…IYAF, and LVAT…SDSL.

It belongs to the chitin synthase family. Class III subfamily.

The protein resides in the cell membrane. It carries out the reaction [(1-&gt;4)-N-acetyl-beta-D-glucosaminyl](n) + UDP-N-acetyl-alpha-D-glucosamine = [(1-&gt;4)-N-acetyl-beta-D-glucosaminyl](n+1) + UDP + H(+). In terms of biological role, polymerizes chitin, a structural polymer of the cell wall and septum, by transferring the sugar moiety of UDP-GlcNAc to the non-reducing end of the growing chitin polymer. Is not only stable at different pH, but is also able to tolerate a broad temperature range. With CHS2, plays an important role in virulence. This is Chitin synthase 3 from Exophiala dermatitidis (strain ATCC 34100 / CBS 525.76 / NIH/UT8656) (Black yeast).